A 650-amino-acid chain; its full sequence is Pentatricopeptide repeat-containing protein At2g41080 (650 aa).

12 PPR repeats span residues 43-77, 78-112, 114-139, 140-174, 175-209, 210-240, 241-275, 276-310, 311-341, 342-372, 378-413, and 414-444; these read NTSL…GFSS, DKFI…NYMS, NILI…MPDR, KLTT…GFSP, DEYT…GLEL, DLVV…MPVR, NLVA…GCRP, NKIT…GASS, VVAV…REDE, DEVM…MAEQ, NEVA…GFKP, and GLKH…MPIK. Positions 449–524 are type E motif; that stretch reads IWKTLLSACN…EAGISWFEHK (76 aa). Positions 525–555 are type E(+) motif; sequence GEVHQFKMGDRSQSKSKEIYSYLKELTLEMK. The interval 556-650 is type DYW motif; sequence LKGYKPDTAS…NGKCSCGDYW (95 aa).

The protein belongs to the PPR family. PCMP-H subfamily.

This Arabidopsis thaliana (Mouse-ear cress) protein is Pentatricopeptide repeat-containing protein At2g41080 (PCMP-H29).